The chain runs to 1172 residues: DNA-directed RNA polymerase subunit beta (1172 aa).

This sequence belongs to the RNA polymerase beta chain family. As to quaternary structure, the RNAP catalytic core consists of 2 alpha, 1 beta, 1 beta' and 1 omega subunit. When a sigma factor is associated with the core the holoenzyme is formed, which can initiate transcription.

It carries out the reaction RNA(n) + a ribonucleoside 5'-triphosphate = RNA(n+1) + diphosphate. DNA-dependent RNA polymerase catalyzes the transcription of DNA into RNA using the four ribonucleoside triphosphates as substrates. The sequence is that of DNA-directed RNA polymerase subunit beta from Mycobacterium sp. (strain KMS).